Reading from the N-terminus, the 423-residue chain is NDP-N-acetyl-D-galactosaminuronic acid dehydrogenase (423 aa).

11 to 28 (TISVVGLGYIGLPTATVL) is an NAD(+) binding site. The Proton donor/acceptor role is filled by K218. C272 acts as the Nucleophile in catalysis.

This sequence belongs to the UDP-glucose/GDP-mannose dehydrogenase family.

In terms of biological role, probably involved in the synthesis of sugar components of EPS I, by converting NDP-N-acetyl-D-galactosamine into NDP-N-acetyl-D-galactosaminuronic acid. This chain is NDP-N-acetyl-D-galactosaminuronic acid dehydrogenase (epsD), found in Ralstonia nicotianae (strain ATCC BAA-1114 / GMI1000) (Ralstonia solanacearum).